Here is a 208-residue protein sequence, read N- to C-terminus: Pyrophosphate-energized proton pump 2 (208 aa).

Helical transmembrane passes span 19-39 (AYPLAICAACVITSIIGTFFV), 54-74 (GLIVTGALSILGLGAATSFTI), 89-109 (GGNLFVCGLIGLVVTALIVVI), 140-160 (LAVSLESTALPAIVIVGGIIA), and 167-187 (LFGTAIAVTAMLGLAGMIVAL).

Belongs to the H(+)-translocating pyrophosphatase (TC 3.A.10) family. Homodimer. Requires Mg(2+) as cofactor.

It is found in the cell inner membrane. It catalyses the reaction diphosphate + H2O + H(+)(in) = 2 phosphate + 2 H(+)(out). Proton pump that utilizes the energy of pyrophosphate hydrolysis as the driving force for proton movement across the membrane. Generates a proton motive force. The polypeptide is Pyrophosphate-energized proton pump 2 (hppA2) (Mycoplana dimorpha).